We begin with the raw amino-acid sequence, 446 residues long: MREIVHIQTGQCGNQIGAAFWQTISGEHGLDSNGIYGGSSELQLERMNVYFNEANNNKYVPRAVLVDLEPGTMDAVRAGPFGQLFRPDNFIFGQSSAGNNWAKGHYTEGAELVDNVLDVIRREAEGCDCLQGFQITHSLGGGTGSGMGTLLISKIREEFPDRMMATFSVVPSPKVSDTVVEPYNATLSVHQLVENSDETFCIDNEALYDICMRTLKLSNPAYGDLNYLVSAVMSGITTCLRFPGQLNSDLRKLAVNMVPFPRLHFFMVGFAPLTSPGAHSFRAVTVPELTQQMFDPKNMMAASDFRNGRYLTCCSIFRGKVAMKEVEDQMRNVQNKNSTYFVEWIPNNIQTALCAIPPRGLKMSSTFIGNSTSIQELFKRVGEQFSAMFRRKAFLHWYTGEGMDEMEFTEAESNMNDLVSEYQQYQEAGIDEEEEYEEEAPAEHEE.

GTP is bound by residues Gln11, Glu69, Ser138, Gly142, Thr143, Gly144, Asn204, and Asn226. Glu69 serves as a coordination point for Mg(2+). The tract at residues 426-446 (QEAGIDEEEEYEEEAPAEHEE) is disordered. Residues 429–440 (GIDEEEEYEEEA) show a composition bias toward acidic residues.

It belongs to the tubulin family. Dimer of alpha and beta chains. A typical microtubule is a hollow water-filled tube with an outer diameter of 25 nm and an inner diameter of 15 nM. Alpha-beta heterodimers associate head-to-tail to form protofilaments running lengthwise along the microtubule wall with the beta-tubulin subunit facing the microtubule plus end conferring a structural polarity. Microtubules usually have 13 protofilaments but different protofilament numbers can be found in some organisms and specialized cells. It depends on Mg(2+) as a cofactor.

The protein resides in the cytoplasm. Its subcellular location is the cytoskeleton. Tubulin is the major constituent of microtubules, a cylinder consisting of laterally associated linear protofilaments composed of alpha- and beta-tubulin heterodimers. Microtubules grow by the addition of GTP-tubulin dimers to the microtubule end, where a stabilizing cap forms. Below the cap, tubulin dimers are in GDP-bound state, owing to GTPase activity of alpha-tubulin. This chain is Tubulin beta-2 chain, found in Hypocrea virens (Gliocladium virens).